The chain runs to 555 residues: uncharacterized protein (555 aa).

5 helical membrane-spanning segments follow: residues 13 to 30, 35 to 57, 72 to 91, 98 to 120, and 157 to 179; these read ALQA…GLGL, FWGV…HFGL, LVIF…FSSF, LNML…SYAT, and TPAL…AVLL. 2 RCK C-terminal domains span residues 188-273 and 282-366; these read EDLE…LFGE and KEDI…VLGN. Helical transmembrane passes span 376–398, 408–430, 437–459, 469–491, 498–517, and 532–554; these read LVVI…SIPG, AGGP…MITY, LMLR…GAHF, LLWI…FVAF, FGSV…ALNY, and ATVY…MFLL.

This sequence belongs to the AAE transporter (TC 2.A.81) family.

It localises to the cell membrane. This is an uncharacterized protein from Bacteroides thetaiotaomicron (strain ATCC 29148 / DSM 2079 / JCM 5827 / CCUG 10774 / NCTC 10582 / VPI-5482 / E50).